The following is a 377-amino-acid chain: tRNA/tmRNA (uracil-C(5))-methyltransferase (377 aa).

S-adenosyl-L-methionine-binding residues include Gln-199, Tyr-227, Asn-232, Glu-248, and Asp-308. Catalysis depends on Cys-333, which acts as the Nucleophile. The active-site Proton acceptor is the Glu-367.

It belongs to the class I-like SAM-binding methyltransferase superfamily. RNA M5U methyltransferase family. TrmA subfamily.

The enzyme catalyses uridine(54) in tRNA + S-adenosyl-L-methionine = 5-methyluridine(54) in tRNA + S-adenosyl-L-homocysteine + H(+). It carries out the reaction uridine(341) in tmRNA + S-adenosyl-L-methionine = 5-methyluridine(341) in tmRNA + S-adenosyl-L-homocysteine + H(+). Functionally, dual-specificity methyltransferase that catalyzes the formation of 5-methyluridine at position 54 (m5U54) in all tRNAs, and that of position 341 (m5U341) in tmRNA (transfer-mRNA). This Aeromonas hydrophila subsp. hydrophila (strain ATCC 7966 / DSM 30187 / BCRC 13018 / CCUG 14551 / JCM 1027 / KCTC 2358 / NCIMB 9240 / NCTC 8049) protein is tRNA/tmRNA (uracil-C(5))-methyltransferase.